A 117-amino-acid polypeptide reads, in one-letter code: Large ribosomal subunit protein bL20c (117 aa).

The protein belongs to the bacterial ribosomal protein bL20 family.

It is found in the plastid. The protein resides in the chloroplast. In terms of biological role, binds directly to 23S ribosomal RNA and is necessary for the in vitro assembly process of the 50S ribosomal subunit. It is not involved in the protein synthesizing functions of that subunit. This is Large ribosomal subunit protein bL20c from Populus alba (White poplar).